We begin with the raw amino-acid sequence, 507 residues long: Maturase K (507 aa).

It belongs to the intron maturase 2 family. MatK subfamily.

It is found in the plastid. The protein localises to the chloroplast. Its function is as follows. Usually encoded in the trnK tRNA gene intron. Probably assists in splicing its own and other chloroplast group II introns. This chain is Maturase K, found in Magnolia figo (Banana shrub).